We begin with the raw amino-acid sequence, 123 residues long: Large ribosomal subunit protein uL22c (123 aa).

Belongs to the universal ribosomal protein uL22 family. In terms of assembly, part of the 50S ribosomal subunit.

The protein localises to the plastid. The protein resides in the chloroplast. Its function is as follows. This protein binds specifically to 23S rRNA. The globular domain of the protein is located near the polypeptide exit tunnel on the outside of the subunit, while an extended beta-hairpin is found that lines the wall of the exit tunnel in the center of the 70S ribosome. The sequence is that of Large ribosomal subunit protein uL22c (rpl22) from Illicium oligandrum (Star anise).